Reading from the N-terminus, the 351-residue chain is tRNA-specific 2-thiouridylase MnmA (351 aa).

ATP contacts are provided by residues 7-14 and leucine 33; that span reads GLSGGVDS. Cysteine 94 (nucleophile) is an active-site residue. Residues cysteine 94 and cysteine 193 are joined by a disulfide bond. Glycine 119 contacts ATP. An interaction with tRNA region spans residues 143-145; the sequence is KDQ. Cysteine 193 acts as the Cysteine persulfide intermediate in catalysis. An interaction with tRNA region spans residues 298–299; the sequence is RY.

This sequence belongs to the MnmA/TRMU family.

It is found in the cytoplasm. The catalysed reaction is S-sulfanyl-L-cysteinyl-[protein] + uridine(34) in tRNA + AH2 + ATP = 2-thiouridine(34) in tRNA + L-cysteinyl-[protein] + A + AMP + diphosphate + H(+). Catalyzes the 2-thiolation of uridine at the wobble position (U34) of tRNA, leading to the formation of s(2)U34. This is tRNA-specific 2-thiouridylase MnmA from Nostoc punctiforme (strain ATCC 29133 / PCC 73102).